The chain runs to 285 residues: Type II restriction enzyme Cfr10I (285 aa).

Positions 134 and 204 each coordinate Mg(2+).

In terms of assembly, homodimer. Mg(2+) serves as cofactor.

The enzyme catalyses Endonucleolytic cleavage of DNA to give specific double-stranded fragments with terminal 5'-phosphates.. An F and P subtype restriction enzyme that recognizes the double-stranded sequence 5'-RCCGGY-3' and cleaves after R-1. This is Type II restriction enzyme Cfr10I (cfr10IR) from Citrobacter freundii.